The sequence spans 585 residues: Cytochrome c lysine N-methyltransferase 1 (585 aa).

An SET domain is found at 18–273 (KSLSLKPSTI…KPIEVFISYS (256 aa)). The SET-like stretch occupies residues 186–288 (LNLSDIKHLY…FSMLVTYGFT (103 aa)).

Belongs to the class V-like SAM-binding methyltransferase superfamily.

Its subcellular location is the cytoplasm. The protein resides in the cytosol. The enzyme catalyses L-lysyl-[cytochrome c] + S-adenosyl-L-methionine = N(6)-methyl-L-lysyl-[cytochrome c] + S-adenosyl-L-homocysteine + H(+). Methyltransferase which mediates trimethylation of 'Lys-78' of cytochrome c (CYC1). The protein is Cytochrome c lysine N-methyltransferase 1 (CTM1) of Saccharomyces cerevisiae (strain ATCC 204508 / S288c) (Baker's yeast).